A 193-amino-acid chain; its full sequence is ATP-dependent protease subunit HslV (193 aa).

Thr-12 is a catalytic residue. Residues Ala-167, Cys-170, and Thr-173 each contribute to the Na(+) site.

Belongs to the peptidase T1B family. HslV subfamily. A double ring-shaped homohexamer of HslV is capped on each side by a ring-shaped HslU homohexamer. The assembly of the HslU/HslV complex is dependent on binding of ATP.

The protein localises to the cytoplasm. The enzyme catalyses ATP-dependent cleavage of peptide bonds with broad specificity.. With respect to regulation, allosterically activated by HslU binding. In terms of biological role, protease subunit of a proteasome-like degradation complex believed to be a general protein degrading machinery. This Bartonella henselae (strain ATCC 49882 / DSM 28221 / CCUG 30454 / Houston 1) (Rochalimaea henselae) protein is ATP-dependent protease subunit HslV.